The primary structure comprises 346 residues: MKLKTMTMEWTGDELILIDQRKIPLKEEYMSCKTYKEVALAIKEMVVRGAPAIGASAAFGYVLGAREKFVEDFEAFVEKMREVKEVLANTRPTAVNLFWALNRMENALRKYGKVEGVLEFLENEALNIAKEDIEVNMAIGRYGAQLLKDGDTVLTHCNAGALATVDYGTALGVIRAAVEQGKRIKVFADETRPYLQGARLTAWELMKDGIDVTLISDNMSGWAMKLGKINAVIVGADRVASNGDVANKIGTYMVAVLAKRHGIPFYVAAPTSTIDLNTQTGKDIPIEERKHTEVTHCGGTQIAPDNVKVFNPAFDVTNAELITAIITEKGIVYPPYEENLKKLFEE.

Substrate-binding positions include 48-50 (RGA), Arg91, and Gln196. The active-site Proton donor is Asp237. 247-248 (NK) lines the substrate pocket.

Belongs to the eIF-2B alpha/beta/delta subunits family. MtnA subfamily.

The enzyme catalyses 5-(methylsulfanyl)-alpha-D-ribose 1-phosphate = 5-(methylsulfanyl)-D-ribulose 1-phosphate. Its pathway is amino-acid biosynthesis; L-methionine biosynthesis via salvage pathway; L-methionine from S-methyl-5-thio-alpha-D-ribose 1-phosphate: step 1/6. Functionally, catalyzes the interconversion of methylthioribose-1-phosphate (MTR-1-P) into methylthioribulose-1-phosphate (MTRu-1-P). The polypeptide is Methylthioribose-1-phosphate isomerase (Thermosipho melanesiensis (strain DSM 12029 / CIP 104789 / BI429)).